A 627-amino-acid polypeptide reads, in one-letter code: Pescadillo homolog (627 aa).

In terms of domain architecture, BRCT spans 321–414; it reads RLRTLFKGLK…QLLPTNKYFI (94 aa). 3 disordered regions span residues 436 to 471, 489 to 562, and 596 to 627; these read PEEK…AVDQ, YKKY…LQAR, and FEAG…KLGK. Residues Ser453 and Ser457 each carry the phosphoserine modification. Acidic residues-rich tracts occupy residues 453 to 471 and 498 to 521; these read SDDD…AVDQ and VNED…EELD. Residues 522-533 are compositionally biased toward basic and acidic residues; sequence EQAKRLKEEKQK. Over residues 540-549 the composition is skewed to basic residues; that stretch reads KVHKVNKRQL. Composition is skewed to basic and acidic residues over residues 550–559 and 596–605; these read HKAEVDEHRL and FEAGEKEARK. Low complexity predominate over residues 616–627; that stretch reads AAAAAKASKLGK.

It belongs to the pescadillo family.

Its subcellular location is the nucleus. The protein localises to the nucleolus. It is found in the nucleoplasm. Required for maturation of ribosomal RNAs and formation of the large ribosomal subunit. The sequence is that of Pescadillo homolog from Drosophila ananassae (Fruit fly).